Consider the following 188-residue polypeptide: dCTP deaminase (188 aa).

Residues 111–116 (KSTYAR), 135–137 (TLE), glutamine 156, tyrosine 170, and glutamine 180 contribute to the dCTP site. Glutamate 137 serves as the catalytic Proton donor/acceptor.

The protein belongs to the dCTP deaminase family. Homotrimer.

The catalysed reaction is dCTP + H2O + H(+) = dUTP + NH4(+). Its pathway is pyrimidine metabolism; dUMP biosynthesis; dUMP from dCTP (dUTP route): step 1/2. Catalyzes the deamination of dCTP to dUTP. This is dCTP deaminase from Marinobacter nauticus (strain ATCC 700491 / DSM 11845 / VT8) (Marinobacter aquaeolei).